Here is a 288-residue protein sequence, read N- to C-terminus: N(1)-aminopropylagmatine ureohydrolase (288 aa).

Mn(2+) contacts are provided by His114, Asp133, His135, Asp137, Asp213, and Asp215.

The protein belongs to the arginase family. Requires Mn(2+) as cofactor.

It localises to the cytoplasm. It catalyses the reaction N(1)-(3-aminopropyl)agmatine + H2O = urea + spermidine. The catalysed reaction is agmatine + H2O = urea + putrescine. It functions in the pathway amine and polyamine biosynthesis; spermidine biosynthesis. Its function is as follows. Involved in the biosynthesis of polyamines which are thought to support the growth of thermophilic microorganisms under high-temperature conditions. It seems that long-chain and branched-chain of polyamines effectively stabilize DNA and RNA, respectively. Catalyzes the decarboxylation of N1-(3-aminopropyl)agmatine to yield spermidine and urea. It can also use agmatine to yield putrescine. The protein is N(1)-aminopropylagmatine ureohydrolase of Thermococcus kodakarensis (strain ATCC BAA-918 / JCM 12380 / KOD1) (Pyrococcus kodakaraensis (strain KOD1)).